Consider the following 434-residue polypeptide: Enolase (434 aa).

Q165 contributes to the (2R)-2-phosphoglycerate binding site. Residue E207 is the Proton donor of the active site. Mg(2+)-binding residues include D244, E291, and D318. 4 residues coordinate (2R)-2-phosphoglycerate: K343, R372, S373, and K394. K343 serves as the catalytic Proton acceptor.

Belongs to the enolase family. It depends on Mg(2+) as a cofactor.

The protein localises to the cytoplasm. Its subcellular location is the secreted. The protein resides in the cell surface. It carries out the reaction (2R)-2-phosphoglycerate = phosphoenolpyruvate + H2O. Its pathway is carbohydrate degradation; glycolysis; pyruvate from D-glyceraldehyde 3-phosphate: step 4/5. Catalyzes the reversible conversion of 2-phosphoglycerate (2-PG) into phosphoenolpyruvate (PEP). It is essential for the degradation of carbohydrates via glycolysis. The sequence is that of Enolase from Staphylococcus saprophyticus subsp. saprophyticus (strain ATCC 15305 / DSM 20229 / NCIMB 8711 / NCTC 7292 / S-41).